The primary structure comprises 275 residues: Sulfate transporter CysZ (275 aa).

Residues 1-24 are disordered; it reads MSSEKSSFPEKPPSFEKPSHSNTA. The segment covering 13 to 24 has biased composition (basic and acidic residues); sequence PSFEKPSHSNTA. 4 helical membrane passes run 49–69, 93–113, 169–189, and 232–252; these read FVILPLLMNIVLMGGAFWWLF, LIWPLAVLSILLVFSYLFSTI, IVLLLLYFIPGIGQTVAPVLW, and ALVSLFTLVPFLNLVIMPVAV.

It belongs to the CysZ family.

The protein localises to the cell inner membrane. Functionally, high affinity, high specificity proton-dependent sulfate transporter, which mediates sulfate uptake. Provides the sulfur source for the cysteine synthesis pathway. This is Sulfate transporter CysZ from Pectobacterium atrosepticum (strain SCRI 1043 / ATCC BAA-672) (Erwinia carotovora subsp. atroseptica).